Reading from the N-terminus, the 108-residue chain is Large ribosomal subunit protein uL24 (108 aa).

It belongs to the universal ribosomal protein uL24 family. As to quaternary structure, part of the 50S ribosomal subunit.

In terms of biological role, one of two assembly initiator proteins, it binds directly to the 5'-end of the 23S rRNA, where it nucleates assembly of the 50S subunit. Its function is as follows. One of the proteins that surrounds the polypeptide exit tunnel on the outside of the subunit. In Moorella thermoacetica (strain ATCC 39073 / JCM 9320), this protein is Large ribosomal subunit protein uL24.